A 283-amino-acid polypeptide reads, in one-letter code: Elongation factor Ts (283 aa).

An involved in Mg(2+) ion dislocation from EF-Tu region spans residues 80–83; sequence TDFV.

The protein belongs to the EF-Ts family.

It localises to the cytoplasm. Associates with the EF-Tu.GDP complex and induces the exchange of GDP to GTP. It remains bound to the aminoacyl-tRNA.EF-Tu.GTP complex up to the GTP hydrolysis stage on the ribosome. The polypeptide is Elongation factor Ts (Actinobacillus pleuropneumoniae serotype 5b (strain L20)).